Consider the following 124-residue polypeptide: uncharacterized protein (124 aa).

Disordered stretches follow at residues 1–31 and 59–124; these read MAQHAFQDQEQEEGRNSRQQKRKSFEDTMKP and EDAR…YPQP. Polar residues-rich tracts occupy residues 65-86 and 98-124; these read GMSSVTPTSSASKIGTKTSDAA and TGEQPSGIQAQNLRGQSSDQSACYPQP.

This is an uncharacterized protein from Bos taurus (Bovine).